Consider the following 372-residue polypeptide: DNA replication and repair protein RecF (372 aa).

30-37 (GENGQGKT) serves as a coordination point for ATP.

Belongs to the RecF family.

It localises to the cytoplasm. Functionally, the RecF protein is involved in DNA metabolism; it is required for DNA replication and normal SOS inducibility. RecF binds preferentially to single-stranded, linear DNA. It also seems to bind ATP. The protein is DNA replication and repair protein RecF of Anaeromyxobacter dehalogenans (strain 2CP-1 / ATCC BAA-258).